The primary structure comprises 515 residues: 3,4-dehydroadipyl-CoA semialdehyde dehydrogenase (515 aa).

Active-site residues include glutamate 255 and cysteine 294. The interval 470–515 (VMPTCLHGGPRARRRRRGVGRSARAGDVSPPLRRAGRPRGAGSPVA) is disordered. Residues 479 to 488 (PRARRRRRGV) are compositionally biased toward basic residues. Low complexity predominate over residues 489-515 (GRSARAGDVSPPLRRAGRPRGAGSPVA).

It belongs to the aldehyde dehydrogenase family. In terms of assembly, homodimer.

It carries out the reaction (3Z)-6-oxohex-3-enoyl-CoA + NADP(+) + H2O = cis-3,4-dehydroadipyl-CoA + NADPH + 2 H(+). Catalyzes the NADP-dependent oxidation of 3,4-dehydroadipyl-CoA semialdehyde to form cis-3,4-dehydroadipyl-CoA. This Aromatoleum evansii (Azoarcus evansii) protein is 3,4-dehydroadipyl-CoA semialdehyde dehydrogenase (boxD).